We begin with the raw amino-acid sequence, 248 residues long: Large ribosomal subunit protein uL30 (248 aa).

M1 carries the N-acetylmethionine modification. 4 repeat units span residues 7–18 (KKKKVPAVPETL), 19–30 (KKKRKNFAELKI), 31–42 (KRLRKKFAQKML), and 43–54 (RKARRKLIYEKA). A 4 X 12 AA tandem repeats region spans residues 7–54 (KKKKVPAVPETLKKKRKNFAELKIKRLRKKFAQKMLRKARRKLIYEKA). T17 bears the Phosphothreonine mark. K124 bears the N6-acetyllysine mark. N6-succinyllysine is present on K127. The residue at position 139 (Y139) is a Phosphotyrosine.

Belongs to the universal ribosomal protein uL30 family. In terms of assembly, component of the large ribosomal subunit. Homodimer. Interacts with DHX33.

It localises to the cytoplasm. Component of the large ribosomal subunit. The ribosome is a large ribonucleoprotein complex responsible for the synthesis of proteins in the cell. Binds to G-rich structures in 28S rRNA and in mRNAs. Plays a regulatory role in the translation apparatus; inhibits cell-free translation of mRNAs. The protein is Large ribosomal subunit protein uL30 (RPL7) of Bos taurus (Bovine).